The sequence spans 154 residues: Myoglobin (154 aa).

The Globin domain maps to G2 to K148. S4 carries the phosphoserine modification. Position 65 (H65) interacts with nitrite. H65 provides a ligand contact to O2. T68 carries the post-translational modification Phosphothreonine. H94 contributes to the heme b binding site.

This sequence belongs to the globin family. Monomeric.

The protein localises to the cytoplasm. The protein resides in the sarcoplasm. It catalyses the reaction Fe(III)-heme b-[protein] + nitric oxide + H2O = Fe(II)-heme b-[protein] + nitrite + 2 H(+). The enzyme catalyses H2O2 + AH2 = A + 2 H2O. Functionally, monomeric heme protein which primary function is to store oxygen and facilitate its diffusion within muscle tissues. Reversibly binds oxygen through a pentacoordinated heme iron and enables its timely and efficient release as needed during periods of heightened demand. Depending on the oxidative conditions of tissues and cells, and in addition to its ability to bind oxygen, it also has a nitrite reductase activity whereby it regulates the production of bioactive nitric oxide. Under stress conditions, like hypoxia and anoxia, it also protects cells against reactive oxygen species thanks to its pseudoperoxidase activity. The chain is Myoglobin (MB) from Gorilla gorilla beringei (Mountain gorilla).